The sequence spans 93 residues: Large ribosomal subunit protein uL23cz/uL23cy (93 aa).

This sequence belongs to the universal ribosomal protein uL23 family. Part of the 50S ribosomal subunit.

It is found in the plastid. Its subcellular location is the chloroplast. Its function is as follows. Binds to 23S rRNA. The protein is Large ribosomal subunit protein uL23cz/uL23cy (rpl23-A) of Cucumis sativus (Cucumber).